Reading from the N-terminus, the 197-residue chain is Probable chorismate pyruvate-lyase (197 aa).

3 residues coordinate substrate: Arg77, Leu115, and Glu176.

Belongs to the UbiC family.

It localises to the cytoplasm. It carries out the reaction chorismate = 4-hydroxybenzoate + pyruvate. Its pathway is cofactor biosynthesis; ubiquinone biosynthesis. Functionally, removes the pyruvyl group from chorismate, with concomitant aromatization of the ring, to provide 4-hydroxybenzoate (4HB) for the ubiquinone pathway. The sequence is that of Probable chorismate pyruvate-lyase from Burkholderia ambifaria (strain ATCC BAA-244 / DSM 16087 / CCUG 44356 / LMG 19182 / AMMD) (Burkholderia cepacia (strain AMMD)).